A 141-amino-acid chain; its full sequence is Large ribosomal subunit protein uL11 (141 aa).

It belongs to the universal ribosomal protein uL11 family. In terms of assembly, part of the ribosomal stalk of the 50S ribosomal subunit. Interacts with L10 and the large rRNA to form the base of the stalk. L10 forms an elongated spine to which L12 dimers bind in a sequential fashion forming a multimeric L10(L12)X complex. Post-translationally, one or more lysine residues are methylated.

Its function is as follows. Forms part of the ribosomal stalk which helps the ribosome interact with GTP-bound translation factors. The protein is Large ribosomal subunit protein uL11 of Brevibacillus brevis (strain 47 / JCM 6285 / NBRC 100599).